The sequence spans 296 residues: Acetylglutamate kinase (296 aa).

Substrate is bound by residues 66 to 67 (GG), arginine 88, and asparagine 191.

The protein belongs to the acetylglutamate kinase family. ArgB subfamily.

It is found in the cytoplasm. It carries out the reaction N-acetyl-L-glutamate + ATP = N-acetyl-L-glutamyl 5-phosphate + ADP. It functions in the pathway amino-acid biosynthesis; L-arginine biosynthesis; N(2)-acetyl-L-ornithine from L-glutamate: step 2/4. In terms of biological role, catalyzes the ATP-dependent phosphorylation of N-acetyl-L-glutamate. The protein is Acetylglutamate kinase of Lawsonia intracellularis (strain PHE/MN1-00).